A 322-amino-acid polypeptide reads, in one-letter code: NADH-quinone oxidoreductase subunit H (322 aa).

8 consecutive transmembrane segments (helical) span residues 15–35 (ILHI…LSIL), 82–102 (IFIL…PTIP), 114–134 (IGIL…LFAG), 149–169 (ASAQ…GVIA), 186–206 (VWNV…GIAL), 243–263 (ISII…YFGF), 265–285 (GSSF…FILI), and 302–322 (WKIC…FILI).

The protein belongs to the complex I subunit 1 family. NDH-1 is composed of 13 different subunits. Subunits NuoA, H, J, K, L, M, N constitute the membrane sector of the complex.

Its subcellular location is the cell membrane. It carries out the reaction a quinone + NADH + 5 H(+)(in) = a quinol + NAD(+) + 4 H(+)(out). Its function is as follows. NDH-1 shuttles electrons from NADH, via FMN and iron-sulfur (Fe-S) centers, to quinones in the respiratory chain. The immediate electron acceptor for the enzyme in this species is believed to be ubiquinone. Couples the redox reaction to proton translocation (for every two electrons transferred, four hydrogen ions are translocated across the cytoplasmic membrane), and thus conserves the redox energy in a proton gradient. This subunit may bind ubiquinone. In Buchnera aphidicola subsp. Schizaphis graminum (strain Sg), this protein is NADH-quinone oxidoreductase subunit H.